The primary structure comprises 396 residues: Chalcone synthase (396 aa).

C169 is an active-site residue.

The protein belongs to the thiolase-like superfamily. Chalcone/stilbene synthases family.

It catalyses the reaction (E)-4-coumaroyl-CoA + 3 malonyl-CoA + 3 H(+) = 2',4,4',6'-tetrahydroxychalcone + 3 CO2 + 4 CoA. The protein operates within secondary metabolite biosynthesis; flavonoid biosynthesis. In terms of biological role, the primary product of this enzyme is 4,2',4',6'-tetrahydroxychalcone (also termed naringenin-chalcone or chalcone) which can under specific conditions spontaneously isomerize into naringenin. The chain is Chalcone synthase (CHS) from Pinus sylvestris (Scotch pine).